The chain runs to 59 residues: MAKVSIKLTKSVIGTKPNQRKTVEALGLKKIGQVTEKEMTPQLRGMIDVVQHLVEVKEI.

This sequence belongs to the universal ribosomal protein uL30 family. Part of the 50S ribosomal subunit.

This is Large ribosomal subunit protein uL30 from Alkaliphilus oremlandii (strain OhILAs) (Clostridium oremlandii (strain OhILAs)).